Consider the following 367-residue polypeptide: Anhydro-N-acetylmuramic acid kinase (367 aa).

ATP is bound at residue 10–17; that stretch reads GTSLDGVD.

The protein belongs to the anhydro-N-acetylmuramic acid kinase family.

It catalyses the reaction 1,6-anhydro-N-acetyl-beta-muramate + ATP + H2O = N-acetyl-D-muramate 6-phosphate + ADP + H(+). It participates in amino-sugar metabolism; 1,6-anhydro-N-acetylmuramate degradation. It functions in the pathway cell wall biogenesis; peptidoglycan recycling. Catalyzes the specific phosphorylation of 1,6-anhydro-N-acetylmuramic acid (anhMurNAc) with the simultaneous cleavage of the 1,6-anhydro ring, generating MurNAc-6-P. Is required for the utilization of anhMurNAc either imported from the medium or derived from its own cell wall murein, and thus plays a role in cell wall recycling. This is Anhydro-N-acetylmuramic acid kinase from Aliivibrio fischeri (strain ATCC 700601 / ES114) (Vibrio fischeri).